The following is a 533-amino-acid chain: MDYKHVDIQKLIELAKYDNYAQEEIVERMIVGQVKHDLWKNINPFDWENLFEKCYSNPKYVFVLLCAYKSIFLCKIDPKIPTSNTIIYLEKIHPIVKQQAKNCDVLSQNNLGFMYEEGIGTEIKINKAKMWYTLSANQGLSFAQYNLGYYYYNKAKYEKSINYFQKSAQSGYYLSNFMLAETYLKLSIPNFNEAIKNYLLAANQGCNISQYRLGMIYFEGKYVNTDMNQAYKWFKLSAKQGNYFSQYGLGRVYYSMDSTKYNCQKAINCFIKSANCGHIYAQKKLIEYYEINNNIAEMIYWCVKSSDVDKIKKYIKINENIENTSDIVYFDLVRKNLEDVGSDILYKCQLLIIQNKYFWKDNVSLCRVKLCEKLENIILKFIDWTNKLQNNSLLLLSCLSFIDDNHNVSIRHHQHTTGLIPYVKQHEFRNKKFITFDKENVSFVNEIIDITNGTDMNEWFESLQFLKLNYQNLMKTSMNSSRIYKDLILIQNLETDIEKYCELMFDEIEYGVYDRNRLFIENREYNMAKLFDN.

Sel1-like repeat units follow at residues 105–140 (VLSQNNLGFMYEEGIGTEIKINKAKMWYTLSANQGL), 141–172 (SFAQYNLGYYYYNKAKYEKSINYFQKSAQSGY), 173–206 (YLSNFMLAETYLKLSIPNFNEAIKNYLLAANQGC), 207–242 (NISQYRLGMIYFEGKYVNTDMNQAYKWFKLSAKQGN), and 243–278 (YFSQYGLGRVYYSMDSTKYNCQKAINCFIKSANCGH).

The polypeptide is Putative sel1-like repeat-containing protein L21 (Acanthamoeba polyphaga mimivirus (APMV)).